The following is a 329-amino-acid chain: Glutamyl-tRNA reductase (329 aa).

Substrate is bound by residues 51–54 (TCLR), S99, 104–106 (EDQ), and Q110. C52 functions as the Nucleophile in the catalytic mechanism. An NADP(+)-binding site is contributed by 179–184 (GIGELA).

Belongs to the glutamyl-tRNA reductase family. In terms of assembly, homodimer.

The catalysed reaction is (S)-4-amino-5-oxopentanoate + tRNA(Glu) + NADP(+) = L-glutamyl-tRNA(Glu) + NADPH + H(+). It functions in the pathway porphyrin-containing compound metabolism; protoporphyrin-IX biosynthesis; 5-aminolevulinate from L-glutamyl-tRNA(Glu): step 1/2. In terms of biological role, catalyzes the NADPH-dependent reduction of glutamyl-tRNA(Glu) to glutamate 1-semialdehyde (GSA). The polypeptide is Glutamyl-tRNA reductase (Fusobacterium nucleatum subsp. nucleatum (strain ATCC 25586 / DSM 15643 / BCRC 10681 / CIP 101130 / JCM 8532 / KCTC 2640 / LMG 13131 / VPI 4355)).